The primary structure comprises 142 residues: MKTFTAKPETVKRDWYVVDATGKTLGRLATELARRLRGKHKAEYTPHVDTGDYIIVLNADKVAVTGNKRTDKVYYHHTGHIGGIKQATFEEMIARRPERVIEIAVKGMLPKGPLGRAMSRKLKVYAGNEHNHAAQQPQVLDI.

Belongs to the universal ribosomal protein uL13 family. As to quaternary structure, part of the 50S ribosomal subunit.

Functionally, this protein is one of the early assembly proteins of the 50S ribosomal subunit, although it is not seen to bind rRNA by itself. It is important during the early stages of 50S assembly. In Shigella dysenteriae serotype 1 (strain Sd197), this protein is Large ribosomal subunit protein uL13.